The primary structure comprises 450 residues: Phosphoglucosamine mutase (450 aa).

Residue Ser-102 is the Phosphoserine intermediate of the active site. Mg(2+) contacts are provided by Ser-102, Asp-243, Asp-245, and Asp-247. Position 102 is a phosphoserine (Ser-102).

The protein belongs to the phosphohexose mutase family. Mg(2+) serves as cofactor. In terms of processing, activated by phosphorylation.

The enzyme catalyses alpha-D-glucosamine 1-phosphate = D-glucosamine 6-phosphate. Catalyzes the conversion of glucosamine-6-phosphate to glucosamine-1-phosphate. The protein is Phosphoglucosamine mutase of Mesorhizobium japonicum (strain LMG 29417 / CECT 9101 / MAFF 303099) (Mesorhizobium loti (strain MAFF 303099)).